The chain runs to 544 residues: uncharacterized protein (544 aa).

Transmembrane regions (helical) follow at residues 41–61 (FSAW…PSFA), 71–91 (AGTP…QCVA), 106–126 (GLYY…AAWL), 166–186 (YQIF…SSMP), 196–216 (WGTV…LAVA), 240–260 (WSNG…MSGY), 280–300 (AIVM…LCIA), 332–352 (VALT…CMVA), 391–411 (VVGI…NAIF), 413–433 (VGAI…VFFV), 451–471 (INGY…CFPQ), and 484–504 (WTCV…FVSA).

The protein belongs to the amino acid-polyamine-organocation (APC) superfamily.

Its subcellular location is the membrane. This is an uncharacterized protein from Schizosaccharomyces pombe (strain 972 / ATCC 24843) (Fission yeast).